The following is a 216-amino-acid chain: Peptide methionine sulfoxide reductase MsrA (216 aa).

Cys54 is a catalytic residue.

Belongs to the MsrA Met sulfoxide reductase family.

It carries out the reaction L-methionyl-[protein] + [thioredoxin]-disulfide + H2O = L-methionyl-(S)-S-oxide-[protein] + [thioredoxin]-dithiol. The catalysed reaction is [thioredoxin]-disulfide + L-methionine + H2O = L-methionine (S)-S-oxide + [thioredoxin]-dithiol. Has an important function as a repair enzyme for proteins that have been inactivated by oxidation. Catalyzes the reversible oxidation-reduction of methionine sulfoxide in proteins to methionine. This Xylella fastidiosa (strain Temecula1 / ATCC 700964) protein is Peptide methionine sulfoxide reductase MsrA.